Consider the following 317-residue polypeptide: Egg-laying defective protein 26 (317 aa).

One can recognise an LRAT domain in the interval Glu156–Asp277. Residues His166 and His178 contribute to the active site. Cys261 (acyl-thioester intermediate) is an active-site residue.

As to expression, highly expressed in the cells of the spermatheca, the mouth, and the lining of the pharynx, the rectum, and the excretory canal. Also expressed in the pharyngeal intestinal junction cell.

It is found in the apical cell membrane. Functionally, putative acyltransferase. Plays a role in the morphogenesis of a vulval toroid cell, vulF, which is located where the vulva and the uterus connect. Not required for specifying vulval cell fate. The chain is Egg-laying defective protein 26 from Caenorhabditis elegans.